Consider the following 71-residue polypeptide: Conotoxin Bu23 (71 aa).

Residues 1–21 (MGMRMMVTVFLLGVLATTVVS) form the signal peptide. A propeptide spanning residues 22–37 (LRSNRASDGRRGIVNK) is cleaved from the precursor. Asn-70 carries the asparagine amide modification.

Belongs to the conotoxin A superfamily. Contains 3 disulfide bonds. They are not indicated here, since framework IV presents two different connectivities (I-V, II-III, IV-VI and I-III, II-V, IV-VI). As to expression, expressed by the venom duct.

It localises to the secreted. The polypeptide is Conotoxin Bu23 (Conus bullatus (Bubble cone)).